The sequence spans 713 residues: KNR4/SMI1 homolog (713 aa).

Disordered regions lie at residues 18–129 (PDRY…VTRD), 255–274 (IFIN…SPVA), 400–457 (RHQM…SKPA), and 500–713 (EPLE…KGKK). Residues 22–34 (ASQQRSSKASQSA) show a composition bias toward low complexity. Residues 35-65 (GANSQNRPLYNNDDNQSEMYQASSSYTGGYT) show a composition bias toward polar residues. Low complexity-rich tracts occupy residues 66–81 (NSPS…GAAA) and 88–103 (SSRN…SSTS). The segment covering 260–270 (NAGSPNSSTPG) has biased composition (polar residues). The segment covering 400–412 (RHQMQRREHERRQ) has biased composition (basic and acidic residues). Residues 413 to 429 (AAAAAQQQQQQQQHHAQ) are compositionally biased toward low complexity. 2 stretches are compositionally biased toward basic and acidic residues: residues 507–605 (EIKG…EEQK) and 613–662 (AKAE…KIDE). Over residues 663-686 (ENGNAEEADEEADDDDEDDEEEGD) the composition is skewed to acidic residues. The span at 701–713 (SKSKKKNKKKGKK) shows a compositional bias: basic residues.

Belongs to the KNR4/SMI1 family.

The chain is KNR4/SMI1 homolog from Yarrowia lipolytica (strain CLIB 122 / E 150) (Yeast).